The primary structure comprises 83 residues: Cytochrome c oxidase subunit 7A2, mitochondrial (83 aa).

Residues 1-23 constitute a mitochondrion transit peptide; it reads MLRNLLALRQIAQRTISTTSRRH. Topologically, residues 24-48 are mitochondrial matrix; sequence FENKVPEKQKLFQEDNGMPVHLKGG. The residue at position 33 (lysine 33) is an N6-acetyllysine. A helical membrane pass occupies residues 49–77; sequence ASDALLYRATMALTLGGTAYAIYLLAMAA. Residues 78–83 are Mitochondrial intermembrane-facing; it reads FPKKQN.

Belongs to the cytochrome c oxidase VIIa family. As to quaternary structure, component of the cytochrome c oxidase (complex IV, CIV), a multisubunit enzyme composed of 14 subunits. The complex is composed of a catalytic core of 3 subunits MT-CO1, MT-CO2 and MT-CO3, encoded in the mitochondrial DNA, and 11 supernumerary subunits COX4I, COX5A, COX5B, COX6A, COX6B, COX6C, COX7A, COX7B, COX7C, COX8 and NDUFA4, which are encoded in the nuclear genome. The complex exists as a monomer or a dimer and forms supercomplexes (SCs) in the inner mitochondrial membrane with NADH-ubiquinone oxidoreductase (complex I, CI) and ubiquinol-cytochrome c oxidoreductase (cytochrome b-c1 complex, complex III, CIII), resulting in different assemblies (supercomplex SCI(1)III(2)IV(1) and megacomplex MCI(2)III(2)IV(2)). Interacts with PET100.

The protein localises to the mitochondrion inner membrane. It participates in energy metabolism; oxidative phosphorylation. Functionally, component of the cytochrome c oxidase, the last enzyme in the mitochondrial electron transport chain which drives oxidative phosphorylation. The respiratory chain contains 3 multisubunit complexes succinate dehydrogenase (complex II, CII), ubiquinol-cytochrome c oxidoreductase (cytochrome b-c1 complex, complex III, CIII) and cytochrome c oxidase (complex IV, CIV), that cooperate to transfer electrons derived from NADH and succinate to molecular oxygen, creating an electrochemical gradient over the inner membrane that drives transmembrane transport and the ATP synthase. Cytochrome c oxidase is the component of the respiratory chain that catalyzes the reduction of oxygen to water. Electrons originating from reduced cytochrome c in the intermembrane space (IMS) are transferred via the dinuclear copper A center (CU(A)) of subunit 2 and heme A of subunit 1 to the active site in subunit 1, a binuclear center (BNC) formed by heme A3 and copper B (CU(B)). The BNC reduces molecular oxygen to 2 water molecules using 4 electrons from cytochrome c in the IMS and 4 protons from the mitochondrial matrix. The protein is Cytochrome c oxidase subunit 7A2, mitochondrial (Cox7a2) of Mus musculus (Mouse).